The primary structure comprises 432 residues: Eukaryotic translation initiation factor 3 subunit E (432 aa).

The 181-residue stretch at 221 to 401 (VYYNYPKGRD…MGVKSVSIHE (181 aa)) folds into the PCI domain.

This sequence belongs to the eIF-3 subunit E family. As to quaternary structure, component of the eukaryotic translation initiation factor 3 (eIF-3) complex.

It is found in the cytoplasm. Its function is as follows. Component of the eukaryotic translation initiation factor 3 (eIF-3) complex, which is involved in protein synthesis of a specialized repertoire of mRNAs and, together with other initiation factors, stimulates binding of mRNA and methionyl-tRNAi to the 40S ribosome. The eIF-3 complex specifically targets and initiates translation of a subset of mRNAs involved in cell proliferation. The protein is Eukaryotic translation initiation factor 3 subunit E of Caenorhabditis elegans.